The sequence spans 525 residues: Phosphoenolpyruvate carboxykinase (ATP) 1 (525 aa).

Substrate-binding residues include Arg55, Tyr190, and Lys196. Residues Lys196, His215, and Gly231–Thr239 contribute to the ATP site. Residues Lys196 and His215 each contribute to the Mn(2+) site. Asp252 is a binding site for Mn(2+). Residues Glu280, Arg317, and Thr442 each contribute to the ATP site. Residue Arg317 participates in substrate binding.

The protein belongs to the phosphoenolpyruvate carboxykinase (ATP) family. Mn(2+) is required as a cofactor.

It is found in the cytoplasm. It carries out the reaction oxaloacetate + ATP = phosphoenolpyruvate + ADP + CO2. It participates in carbohydrate biosynthesis; gluconeogenesis. Its function is as follows. Involved in the gluconeogenesis. Catalyzes the conversion of oxaloacetate (OAA) to phosphoenolpyruvate (PEP) through direct phosphoryl transfer between the nucleoside triphosphate and OAA. The chain is Phosphoenolpyruvate carboxykinase (ATP) 1 from Moorella thermoacetica (strain ATCC 39073 / JCM 9320).